Reading from the N-terminus, the 386-residue chain is D(1)-like dopamine receptor (386 aa).

Residues 1–10 (MEIFTTTRGT) are compositionally biased toward polar residues. Residues 1–28 (MEIFTTTRGTSAGPEPAPGGHGGTDSPR) form a disordered region. The Extracellular segment spans residues 1-35 (MEIFTTTRGTSAGPEPAPGGHGGTDSPRTSDLSLR). Residues 36–56 (ALTGCVLCILIVSTLLGNALV) traverse the membrane as a helical segment. Residues 57 to 72 (CAAVIKFRHLRSKVTN) lie on the Cytoplasmic side of the membrane. Residues 73-92 (AFVISLAVSDLFVAVLVMPW) form a helical membrane-spanning segment. The Extracellular portion of the chain corresponds to 93–109 (RAVSEVAGVWLFGAFCD). The cysteines at positions 108 and 188 are disulfide-linked. Residues 110–131 (TWVAFDIMCSTASILHLCIISM) form a helical membrane-spanning segment. Topologically, residues 132 to 150 (DRYWAISSPFRYERRMTPR) are cytoplasmic. A helical membrane pass occupies residues 151–175 (FGCVMIGVAWTLSVLISFIPVQLNW). Topologically, residues 176–195 (HARGRERTDPGDCNASLNRT) are extracellular. 2 N-linked (GlcNAc...) asparagine glycosylation sites follow: asparagine 189 and asparagine 193. The helical transmembrane segment at 196–220 (YAISSSLISFYIPVLIMVGTYTRIF) threads the bilayer. Topologically, residues 221 to 266 (RIGRTQIRRISSLERAAPRATRGPALCDEESSLKTSFRRETKVLKT) are cytoplasmic. The helical transmembrane segment at 267 to 292 (LSVIMGVFVFCWLPFFVLNCMVPFCR) threads the bilayer. Over 293-305 (LEPAAAPCVSDTT) the chain is Extracellular. The chain crosses the membrane as a helical span at residues 306 to 325 (FSVFVWFGWANSSLNPVIYA). Topologically, residues 326–386 (FNADFRKAFS…SRGGPYQFAL (61 aa)) are cytoplasmic.

It belongs to the G-protein coupled receptor 1 family.

It localises to the cell membrane. Its subcellular location is the cell projection. The protein resides in the cilium membrane. This is one of the five types (D1 to D5) of receptors for dopamine. The activity of this receptor is mediated by G proteins which activate adenylyl cyclase. The chain is D(1)-like dopamine receptor from Oreochromis mossambicus (Mozambique tilapia).